The primary structure comprises 115 residues: Guanylin (115 aa).

A signal peptide spans 1 to 23 (MNAWLLSVLCLLGALAVLVEGVT). The propeptide occupies 24–100 (VQDGDLSFPL…LQRLEAIAQD (77 aa)). 3 disulfide bridges follow: C69–C82, C104–C112, and C107–C115.

This sequence belongs to the guanylin family. In terms of tissue distribution, intestine and in low abundance in adrenal gland, kidney, and uterus/oviduct.

It is found in the secreted. In terms of biological role, endogenous activator of intestinal guanylate cyclase. It stimulates this enzyme through the same receptor binding region as the heat-stable enterotoxins. The chain is Guanylin (Guca2a) from Rattus norvegicus (Rat).